The following is a 127-amino-acid chain: MYRTFMTSKLHKATVTEANLHYVGSITIDEDLLDAAGMMANEKVQIVNNHNGARLETYIIPGERKSGVICLNGAAARLVQPGDEVIIIAYGMLSEGEAKTHTPKVVVLNKENQIEQMIGQEPARTIL.

The active-site Schiff-base intermediate with substrate; via pyruvic acid is the serine 25. At serine 25 the chain carries Pyruvic acid (Ser). Threonine 57 contacts substrate. Tyrosine 58 acts as the Proton donor in catalysis. Substrate is bound at residue 73 to 75 (GAA).

This sequence belongs to the PanD family. As to quaternary structure, heterooctamer of four alpha and four beta subunits. The cofactor is pyruvate. Is synthesized initially as an inactive proenzyme, which is activated by self-cleavage at a specific serine bond to produce a beta-subunit with a hydroxyl group at its C-terminus and an alpha-subunit with a pyruvoyl group at its N-terminus.

It localises to the cytoplasm. It catalyses the reaction L-aspartate + H(+) = beta-alanine + CO2. Its pathway is cofactor biosynthesis; (R)-pantothenate biosynthesis; beta-alanine from L-aspartate: step 1/1. Its function is as follows. Catalyzes the pyruvoyl-dependent decarboxylation of aspartate to produce beta-alanine. The sequence is that of Aspartate 1-decarboxylase from Bacillus pumilus (strain SAFR-032).